Reading from the N-terminus, the 696-residue chain is Gametogenetin-binding protein 2 (696 aa).

2 positions are modified to phosphoserine: Ser-360 and Ser-602.

In terms of assembly, interacts with isoform 1 of GGN. Testis-specific.

Its subcellular location is the cytoplasmic vesicle. May be involved in spermatogenesis. In Mus musculus (Mouse), this protein is Gametogenetin-binding protein 2 (Ggnbp2).